The primary structure comprises 287 residues: T-cell ecto-ADP-ribosyltransferase 1 (287 aa).

Residues Met-1–Gly-20 form the signal peptide. Intrachain disulfides connect Cys-41/Cys-246, Cys-80/Cys-201, and Cys-141/Cys-193. The 181-residue stretch at Glu-61–Lys-241 folds into the TR mART core domain. 2 residues coordinate NAD(+): Tyr-98 and Arg-146. Residues Arg-146 and Ser-167 contribute to the active site. N-linked (GlcNAc...) asparagine glycosylation is present at Asn-171. NAD(+) is bound at residue Ser-202. The active site involves Glu-209. The N-linked (GlcNAc...) asparagine glycan is linked to Asn-256. Ser-258 carries GPI-anchor amidated serine lipidation. The propeptide at Ser-259–Pro-287 is removed in mature form.

The protein belongs to the Arg-specific ADP-ribosyltransferase family. It is proposed that in the absence of reducing agents, a disulfide bond is formed between Cys-80 and Cys-201, leading to a conformational change that reduces the catalytic rate of NAD glycohydrolysis. As to expression, expressed in spleen, intestine and thymus.

It is found in the cell membrane. The enzyme catalyses L-arginyl-[protein] + NAD(+) = N(omega)-(ADP-D-ribosyl)-L-arginyl-[protein] + nicotinamide + H(+). It catalyses the reaction NAD(+) + H2O = ADP-D-ribose + nicotinamide + H(+). Functionally, has both ADP-ribosyltransferase activity and thiol-dependent NAD(+) glycohydrolase activity. The protein is T-cell ecto-ADP-ribosyltransferase 1 (Art2a) of Mus musculus (Mouse).